A 319-amino-acid polypeptide reads, in one-letter code: MSEKTAVVLLQMGGPDSIAAVEPFLFNLFSDREIIKIGPALLQPFIARFICRRRAPKVEAYYEQIGGKSPIRELTEAQAKALETELGDGYRAFVAMRYWKPTTIDALAAIKREGISRVIALSLYPHYSRATAGSSINELKRVLGQAGVSFQVSYIDRFYDHPLYIKALAEKVEEGLSEFSDRSRVTLVFSAHSLPQSFIDDGDPYLSHIQATVRLVMERLGNIDYHLAFQSRAGPVKWLEPSTEEMMKRLATEGRKEMLMVPLSFVSDHIETLYEVDIQYAKEAKQLGIDKFRRSPSLNSSPLFIECLAELVKSVKGEG.

Fe cation contacts are provided by H192 and E271.

The protein belongs to the ferrochelatase family.

It localises to the cytoplasm. It catalyses the reaction heme b + 2 H(+) = protoporphyrin IX + Fe(2+). It functions in the pathway porphyrin-containing compound metabolism; protoheme biosynthesis; protoheme from protoporphyrin-IX: step 1/1. Its function is as follows. Catalyzes the ferrous insertion into protoporphyrin IX. The chain is Ferrochelatase from Geotalea daltonii (strain DSM 22248 / JCM 15807 / FRC-32) (Geobacter daltonii).